A 107-amino-acid chain; its full sequence is U1-lycotoxin-Ls1b (107 aa).

The signal sequence occupies residues 1–20 (MMKVLVVFALLVTLISYSSS). A propeptide spanning residues 21-41 (EGIDDLEADELLSLMANEQTR) is cleaved from the precursor. 4 disulfides stabilise this stretch: C44–C59, C51–C68, C58–C86, and C70–C84.

Belongs to the neurotoxin 19 (CSTX) family. 04 (U1-Lctx) subfamily. In terms of tissue distribution, expressed by the venom gland.

Its subcellular location is the secreted. The chain is U1-lycotoxin-Ls1b from Lycosa singoriensis (Wolf spider).